Reading from the N-terminus, the 436-residue chain is Trigger factor (436 aa).

One can recognise a PPIase FKBP-type domain in the interval 161-248 (TDRVTIDLYG…LKKVEQYRLP (88 aa)).

The protein belongs to the FKBP-type PPIase family. Tig subfamily.

The protein localises to the cytoplasm. It carries out the reaction [protein]-peptidylproline (omega=180) = [protein]-peptidylproline (omega=0). In terms of biological role, involved in protein export. Acts as a chaperone by maintaining the newly synthesized protein in an open conformation. Functions as a peptidyl-prolyl cis-trans isomerase. The sequence is that of Trigger factor from Baumannia cicadellinicola subsp. Homalodisca coagulata.